The chain runs to 635 residues: Threonine--tRNA ligase (635 aa).

Positions 1-62 constitute a TGS domain; it reads MITITLPDGS…EHDAMLRIIT (62 aa). Residues 244–535 form a catalytic region; sequence DHRKIGKVQD…LIEHYAGIWP (292 aa). Zn(2+)-binding residues include cysteine 335, histidine 386, and histidine 512.

The protein belongs to the class-II aminoacyl-tRNA synthetase family. In terms of assembly, homodimer. The cofactor is Zn(2+).

The protein localises to the cytoplasm. It catalyses the reaction tRNA(Thr) + L-threonine + ATP = L-threonyl-tRNA(Thr) + AMP + diphosphate + H(+). Functionally, catalyzes the attachment of threonine to tRNA(Thr) in a two-step reaction: L-threonine is first activated by ATP to form Thr-AMP and then transferred to the acceptor end of tRNA(Thr). Also edits incorrectly charged L-seryl-tRNA(Thr). The chain is Threonine--tRNA ligase from Xylella fastidiosa (strain 9a5c).